Here is a 589-residue protein sequence, read N- to C-terminus: Probable cytochrome P450 49a1 (589 aa).

The tract at residues 56-90 is disordered; that stretch reads TGESSNPKKLNVSQQPVTSVATTRTTASSLPAETT. Positions 57–71 are enriched in polar residues; sequence GESSNPKKLNVSQQP. Low complexity predominate over residues 72–84; the sequence is VTSVATTRTTASS. C536 is a heme binding site.

This sequence belongs to the cytochrome P450 family. Requires heme as cofactor.

It is found in the endoplasmic reticulum membrane. The protein resides in the microsome membrane. Functionally, may be involved in the metabolism of insect hormones and in the breakdown of synthetic insecticides. The chain is Probable cytochrome P450 49a1 (Cyp49a1) from Drosophila melanogaster (Fruit fly).